We begin with the raw amino-acid sequence, 1392 residues long: DNA-directed RNA polymerase subunit beta'' (1392 aa).

Zn(2+)-binding residues include Cys224, Cys295, Cys302, and Cys305.

Belongs to the RNA polymerase beta' chain family. RpoC2 subfamily. In plastids the minimal PEP RNA polymerase catalytic core is composed of four subunits: alpha, beta, beta', and beta''. When a (nuclear-encoded) sigma factor is associated with the core the holoenzyme is formed, which can initiate transcription. Requires Zn(2+) as cofactor.

It localises to the plastid. The protein resides in the chloroplast. The enzyme catalyses RNA(n) + a ribonucleoside 5'-triphosphate = RNA(n+1) + diphosphate. Its function is as follows. DNA-dependent RNA polymerase catalyzes the transcription of DNA into RNA using the four ribonucleoside triphosphates as substrates. The protein is DNA-directed RNA polymerase subunit beta'' of Nicotiana sylvestris (Wood tobacco).